A 407-amino-acid chain; its full sequence is Imidazolonepropionase (407 aa).

Residues histidine 72 and histidine 74 each coordinate Fe(3+). The Zn(2+) site is built by histidine 72 and histidine 74. Residues arginine 81, tyrosine 144, and histidine 177 each coordinate 4-imidazolone-5-propanoate. Tyrosine 144 serves as a coordination point for N-formimidoyl-L-glutamate. Histidine 242 contacts Fe(3+). Histidine 242 is a binding site for Zn(2+). Glutamine 245 contributes to the 4-imidazolone-5-propanoate binding site. Aspartate 317 provides a ligand contact to Fe(3+). Aspartate 317 provides a ligand contact to Zn(2+). Asparagine 319 and glycine 321 together coordinate N-formimidoyl-L-glutamate. Threonine 322 is a binding site for 4-imidazolone-5-propanoate.

The protein belongs to the metallo-dependent hydrolases superfamily. HutI family. It depends on Zn(2+) as a cofactor. Fe(3+) is required as a cofactor.

The protein localises to the cytoplasm. The enzyme catalyses 4-imidazolone-5-propanoate + H2O = N-formimidoyl-L-glutamate. It functions in the pathway amino-acid degradation; L-histidine degradation into L-glutamate; N-formimidoyl-L-glutamate from L-histidine: step 3/3. Its function is as follows. Catalyzes the hydrolytic cleavage of the carbon-nitrogen bond in imidazolone-5-propanoate to yield N-formimidoyl-L-glutamate. It is the third step in the universal histidine degradation pathway. The sequence is that of Imidazolonepropionase from Aliivibrio salmonicida (strain LFI1238) (Vibrio salmonicida (strain LFI1238)).